The chain runs to 426 residues: Glutamate-1-semialdehyde 2,1-aminomutase (426 aa).

An N6-(pyridoxal phosphate)lysine modification is found at K265.

Belongs to the class-III pyridoxal-phosphate-dependent aminotransferase family. HemL subfamily. In terms of assembly, homodimer. Requires pyridoxal 5'-phosphate as cofactor.

The protein localises to the cytoplasm. The enzyme catalyses (S)-4-amino-5-oxopentanoate = 5-aminolevulinate. It functions in the pathway porphyrin-containing compound metabolism; protoporphyrin-IX biosynthesis; 5-aminolevulinate from L-glutamyl-tRNA(Glu): step 2/2. The protein is Glutamate-1-semialdehyde 2,1-aminomutase of Salmonella agona (strain SL483).